A 466-amino-acid polypeptide reads, in one-letter code: Soluble pyridine nucleotide transhydrogenase (466 aa).

36–45 is a binding site for FAD; sequence ERYHNVGGGC.

This sequence belongs to the class-I pyridine nucleotide-disulfide oxidoreductase family. FAD serves as cofactor.

It is found in the cytoplasm. The enzyme catalyses NAD(+) + NADPH = NADH + NADP(+). Functionally, conversion of NADPH, generated by peripheral catabolic pathways, to NADH, which can enter the respiratory chain for energy generation. This chain is Soluble pyridine nucleotide transhydrogenase, found in Salmonella paratyphi C (strain RKS4594).